We begin with the raw amino-acid sequence, 178 residues long: Large ribosomal subunit protein uL6 (178 aa).

It belongs to the universal ribosomal protein uL6 family. In terms of assembly, part of the 50S ribosomal subunit.

This protein binds to the 23S rRNA, and is important in its secondary structure. It is located near the subunit interface in the base of the L7/L12 stalk, and near the tRNA binding site of the peptidyltransferase center. In Tropheryma whipplei (strain TW08/27) (Whipple's bacillus), this protein is Large ribosomal subunit protein uL6.